A 468-amino-acid polypeptide reads, in one-letter code: Tripartite motif-containing protein 75 (468 aa).

The segment at 16–57 adopts an RING-type zinc-finger fold; that stretch reads CSICLDYLSDPVTIECGHNFCRSCIQQSWLDLQELFPCPVCR. The segment at 92-133 adopts a B box-type zinc-finger fold; the sequence is EETTLCEKHNQPLSVFCKEDLMVLCPLCTQPPDHQGHHVRPI. Zn(2+)-binding residues include cysteine 97, histidine 100, cysteine 119, and histidine 125. Positions 170–222 form a coiled coil; that stretch reads LELREMVENQRQELSSEFEHLNQFLDREQQAVLSRLAEEEKDNQQKLSANITA. One can recognise a B30.2/SPRY domain in the interval 276-468; the sequence is CSFPPQYSAL…LRICTGTVCE (193 aa).

This sequence belongs to the TRIM/RBCC family.

The protein resides in the cytoplasm. Its subcellular location is the cytoskeleton. It is found in the spindle. Its function is as follows. May play a role in female meiosis. In Homo sapiens (Human), this protein is Tripartite motif-containing protein 75.